A 485-amino-acid chain; its full sequence is Homeobox protein unplugged (485 aa).

Disordered regions lie at residues 1–65 (MERP…QEQE), 114–157 (PAGH…DTRF), and 212–325 (GMAQ…RRTA). Residues 54-64 (RDQEQEAEQEQ) are compositionally biased toward acidic residues. The segment covering 114-128 (PAGHPAAQQPQAQAQ) has biased composition (low complexity). 2 stretches are compositionally biased toward polar residues: residues 223–234 (QAHSSPAKSGSH) and 254–267 (DSCSDISLTMSPRN). A compositionally biased stretch (acidic residues) spans 284–293 (DSEDCSDDEG). A compositionally biased stretch (low complexity) spans 308-317 (SQGNGSSSNS). The homeobox DNA-binding region spans 319–378 (SRRRRTAFTSEQLLELEREFHAKKYLSLTERSQIATSLKLSEVQVKIWFQNRRAKWKRVK).

As to expression, expressed in the neuroectodermal and mesectodermal cells at the ventral midline of stage 8 embryos, Subsequently, expression domains in the CNS widen and have their most anterior border in the posterior deutocerebrum. Oc/otd and unpg are mutual repressors at the interface of their brain-specific expression domains. Expression fades during germ band retraction and is then restricted to subset of cells by stage 14. Expressed in the founder cells of the cerebral branch within the first tracheal metamere. Outside the CNS, expression is seen in two clusters of ectodermal cells located laterally within the labial and first thoracic segments of stage 9 embryos. By stage 13, the expression is detected in a few cells close to the dorsal midline of the embryos.

It localises to the nucleus. Plays a regulatory role in neural branching of the tracheae: segment-specific aspects of these neural branching patterns appear to be generated by homeotic regulation of expression. May have a role with oc/otd in the postembryonic development of the brain. The polypeptide is Homeobox protein unplugged (Drosophila melanogaster (Fruit fly)).